A 540-amino-acid chain; its full sequence is MAKKITFNEDARRGLERGLNTLADTVKVTLGPRGRNVVLEKKWGAPVITNDGVTIAKEIELDDPYEKIGAELVKEVAKKTDDVAGDGTTTSVVLAQAMVREGLKNVAAGADPISLRRGIEKSVAAVSKALLTSAKEVETEAEIAACASISAGDPQIGDIIAQALEKVGKEGVVTVEESNTFGTELEITEGMRFDKGYLSAYFVTDAERQETVFENPYILICDSKISSVKDLLPVVDKVIQSGKQLLIIAEDVDGEALATLVVNKIRGIFKSVAVKAPGFGDRRKMMLQDIAVLTGGQVISEEVGLKLENATLDLLGCARKVVVSKDETTIVDGAGSSDQIAGRVSQIRKELENSDSDYDREKLQERLAKLSGGVAVIRSGAATEVELKERKHRIEDAVRNAKAAVEEGIVAGGGAALLQSGTSALKDLQLTSEEAVGRNIVRSAIEAPLRQISLNAGLEPGVVVGKVSSLPQGHGLDASTGEYVDMLSRGISDPVKVTRSALENAASIAGLFLTTEAVVAEKPEPKPAPGPADPGAGMDF.

ATP-binding positions include 29-32, 86-90, glycine 413, and aspartate 493; these read TLGP and DGTTT. The tract at residues 520 to 540 is disordered; that stretch reads AEKPEPKPAPGPADPGAGMDF.

The protein belongs to the chaperonin (HSP60) family. In terms of assembly, forms a cylinder of 14 subunits composed of two heptameric rings stacked back-to-back. Interacts with the co-chaperonin GroES.

It is found in the cytoplasm. It catalyses the reaction ATP + H2O + a folded polypeptide = ADP + phosphate + an unfolded polypeptide.. Functionally, together with its co-chaperonin GroES, plays an essential role in assisting protein folding. The GroEL-GroES system forms a nano-cage that allows encapsulation of the non-native substrate proteins and provides a physical environment optimized to promote and accelerate protein folding. This is Chaperonin GroEL from Tropheryma whipplei (strain TW08/27) (Whipple's bacillus).